The sequence spans 343 residues: GDSL esterase/lipase EXL4 (343 aa).

The first 21 residues, 1 to 21, serve as a signal peptide directing secretion; it reads MCSKITLVLTLFSSYFISTDA. N23 carries an N-linked (GlcNAc...) asparagine glycan. S35 (nucleophile) is an active-site residue. Catalysis depends on residues D318 and H321.

Belongs to the 'GDSL' lipolytic enzyme family. In terms of tissue distribution, flower buds and pollen.

The protein resides in the secreted. Its subcellular location is the extracellular space. It localises to the extracellular matrix. It is found in the pollen coat. In terms of biological role, required for the formation of pollen coats and male fertility. The sequence is that of GDSL esterase/lipase EXL4 (EXL4) from Arabidopsis thaliana (Mouse-ear cress).